Here is a 718-residue protein sequence, read N- to C-terminus: Heme peroxidase 2 (718 aa).

The first 19 residues, Met-1 to Thr-19, serve as a signal peptide directing secretion. The propeptide occupies Phe-20–Pro-146. Disordered regions lie at residues Arg-41 to Asp-64 and Leu-108 to Ser-144. The span at Asn-45–Asp-64 shows a compositional bias: polar residues. The segment covering Leu-109–Thr-118 has biased composition (low complexity). Basic residues predominate over residues Ser-126–Asn-139. Cys-149 and Cys-164 are disulfide-bonded. The active-site Proton acceptor is His-241. Asp-242 contributes to the Ca(2+) binding site. Residues Cys-262 and Cys-272 are joined by a disulfide bond. Ca(2+) contacts are provided by Ser-311, Phe-313, Asp-315, and Ser-317. Residue Asn-354 is glycosylated (N-linked (GlcNAc...) asparagine). Cys-358 and Cys-366 form a disulfide bridge. His-477 contacts heme b. Residues Asn-551, Asn-592, Asn-662, and Asn-673 are each glycosylated (N-linked (GlcNAc...) asparagine). Cys-682 and Cys-705 form a disulfide bridge.

The protein belongs to the peroxidase family. Requires heme b as cofactor. Expressed in the hypodermis and gland cells of the pharynx. Specifically, there is low and transient expression from the distal bulb of the pharynx to the anterior of the buccal cavity. Whole body expression levels increase upon entry into the dauer phase.

The protein resides in the secreted. The enzyme catalyses 2 a phenolic donor + H2O2 = 2 a phenolic radical donor + 2 H2O. Peroxidase which is involved in maintaining the cuticle integrity in the hypodermis and pharynx. It thus plays a role in conferring resistance against Gram-positive bacteria such as E.faecalis, S.aureus and C.diphtheriae, and yeast such as C.albicans. This is Heme peroxidase 2 from Caenorhabditis elegans.